We begin with the raw amino-acid sequence, 172 residues long: Cytochrome b6-f complex iron-sulfur subunit (172 aa).

Residues 19-39 form a helical membrane-spanning segment; sequence LNALLSGSVGVVVVGALYPVV. The Rieske domain occupies 61-161; the sequence is GKPISVSELL…ATVDGDNVRF (101 aa). The [2Fe-2S] cluster site is built by C107, H109, C125, and H128. Residues C112 and C127 are joined by a disulfide bond.

This sequence belongs to the Rieske iron-sulfur protein family. The 4 large subunits of the cytochrome b6-f complex are cytochrome b6, subunit IV (17 kDa polypeptide, PetD), cytochrome f and the Rieske protein, while the 4 small subunits are PetG, PetL, PetM and PetN. The complex functions as a dimer. [2Fe-2S] cluster serves as cofactor.

The protein localises to the cellular thylakoid membrane. The catalysed reaction is 2 oxidized [plastocyanin] + a plastoquinol + 2 H(+)(in) = 2 reduced [plastocyanin] + a plastoquinone + 4 H(+)(out). Its function is as follows. Component of the cytochrome b6-f complex, which mediates electron transfer between photosystem II (PSII) and photosystem I (PSI), cyclic electron flow around PSI, and state transitions. In Synechococcus sp. (strain JA-2-3B'a(2-13)) (Cyanobacteria bacterium Yellowstone B-Prime), this protein is Cytochrome b6-f complex iron-sulfur subunit.